A 664-amino-acid polypeptide reads, in one-letter code: Transketolase 1 (664 aa).

H26 contacts substrate. Residues H66 and 114-116 contribute to the thiamine diphosphate site; that span reads GPL. A Mg(2+)-binding site is contributed by D155. 2 residues coordinate thiamine diphosphate: G156 and N185. Mg(2+)-binding residues include N185 and I187. The substrate site is built by H260, R357, and S384. Residue H260 coordinates thiamine diphosphate. E411 functions as the Proton donor in the catalytic mechanism. Position 437 (F437) interacts with thiamine diphosphate. Positions 461, 469, and 520 each coordinate substrate.

This sequence belongs to the transketolase family. As to quaternary structure, homodimer. Requires Mg(2+) as cofactor. Ca(2+) serves as cofactor. It depends on Mn(2+) as a cofactor. The cofactor is Co(2+). Thiamine diphosphate is required as a cofactor.

It carries out the reaction D-sedoheptulose 7-phosphate + D-glyceraldehyde 3-phosphate = aldehydo-D-ribose 5-phosphate + D-xylulose 5-phosphate. Catalyzes the transfer of a two-carbon ketol group from a ketose donor to an aldose acceptor, via a covalent intermediate with the cofactor thiamine pyrophosphate. This is Transketolase 1 (tkt1) from Vibrio vulnificus (strain YJ016).